The chain runs to 144 residues: Ig heavy chain V region MOPC 141 (144 aa).

Residues 1-19 (MAVLALLFCLATFPSCILS) form the signal peptide. In terms of domain architecture, Ig-like spans 20–130 (QVQLKESGPG…YYGRSDKYFT (111 aa)).

This Mus musculus (Mouse) protein is Ig heavy chain V region MOPC 141.